The following is a 325-amino-acid chain: Glutarate 2-hydroxylase (325 aa).

3 residues coordinate Fe cation: H160, D162, and H292.

The protein belongs to the glutarate hydroxylase family. Homotetramer. Fe(2+) is required as a cofactor.

It catalyses the reaction glutarate + 2-oxoglutarate + O2 = (S)-2-hydroxyglutarate + succinate + CO2. It participates in amino-acid degradation. Its function is as follows. Acts as an alpha-ketoglutarate-dependent dioxygenase catalyzing hydroxylation of glutarate (GA) to L-2-hydroxyglutarate (L2HG). Functions in a L-lysine degradation pathway that proceeds via cadaverine, glutarate and L-2-hydroxyglutarate. This Pseudomonas putida (strain GB-1) protein is Glutarate 2-hydroxylase.